The following is a 328-amino-acid chain: GTPase Obg 2 (328 aa).

Residues 1–139 (MSFRREKFIE…HCVLLKLKIV (139 aa)) enclose the Obg domain. The OBG-type G domain occupies 140 to 309 (SDVGIIGMPN…LHAQVKKAVV (170 aa)). Residues 146–153 (GMPNAGKS), 171–175 (FTTLE), 192–195 (DIPG), 259–262 (NKCD), and 290–292 (GDE) each bind GTP. 2 residues coordinate Mg(2+): Ser153 and Thr173.

Belongs to the TRAFAC class OBG-HflX-like GTPase superfamily. OBG GTPase family. As to quaternary structure, monomer. The cofactor is Mg(2+).

Its subcellular location is the cytoplasm. Functionally, an essential GTPase which binds GTP, GDP and possibly (p)ppGpp with moderate affinity, with high nucleotide exchange rates and a fairly low GTP hydrolysis rate. Plays a role in control of the cell cycle, stress response, ribosome biogenesis and in those bacteria that undergo differentiation, in morphogenesis control. The sequence is that of GTPase Obg 2 from Anaplasma marginale (strain Florida).